We begin with the raw amino-acid sequence, 177 residues long: RNA pyrophosphohydrolase (177 aa).

Residues 6–149 (GYRPNVGIVI…KRDVYRRVMK (144 aa)) enclose the Nudix hydrolase domain. The Nudix box signature appears at 38–59 (GGINPGESAEQAMYRELFEEVG).

It belongs to the Nudix hydrolase family. RppH subfamily. The cofactor is a divalent metal cation.

Functionally, accelerates the degradation of transcripts by removing pyrophosphate from the 5'-end of triphosphorylated RNA, leading to a more labile monophosphorylated state that can stimulate subsequent ribonuclease cleavage. The protein is RNA pyrophosphohydrolase of Pectobacterium carotovorum subsp. carotovorum (strain PC1).